Consider the following 275-residue polypeptide: Methylglyoxal reductase DkgA (275 aa).

Tyr-51 (proton donor) is an active-site residue. A substrate-binding site is contributed by His-107. 187-241 (SPLAQGGEGVFDQKVIRELADKYGKTPAQIVIRWHLDCGLVVIPKSVTPSRIAEN) lines the NADP(+) pocket.

The protein belongs to the aldo/keto reductase family. In terms of assembly, monomer.

The protein resides in the cytoplasm. The catalysed reaction is hydroxyacetone + NADP(+) = methylglyoxal + NADPH + H(+). Aldo-keto reductase that significantly contributes to cellular methylglyoxal detoxification by catalyzing the NADPH-dependent conversion of methylglyoxal to acetol. This Salmonella typhimurium (strain LT2 / SGSC1412 / ATCC 700720) protein is Methylglyoxal reductase DkgA.